A 250-amino-acid chain; its full sequence is UPF0736 protein YjbA (250 aa).

This sequence belongs to the UPF0736 family.

The protein is UPF0736 protein YjbA (yjbA) of Bacillus subtilis (strain 168).